A 137-amino-acid polypeptide reads, in one-letter code: Ribosome-binding factor A (137 aa).

This sequence belongs to the RbfA family. In terms of assembly, monomer. Binds 30S ribosomal subunits, but not 50S ribosomal subunits or 70S ribosomes.

The protein resides in the cytoplasm. One of several proteins that assist in the late maturation steps of the functional core of the 30S ribosomal subunit. Associates with free 30S ribosomal subunits (but not with 30S subunits that are part of 70S ribosomes or polysomes). Required for efficient processing of 16S rRNA. May interact with the 5'-terminal helix region of 16S rRNA. The sequence is that of Ribosome-binding factor A from Erwinia tasmaniensis (strain DSM 17950 / CFBP 7177 / CIP 109463 / NCPPB 4357 / Et1/99).